Here is a 363-residue protein sequence, read N- to C-terminus: 3-isopropylmalate dehydrogenase (363 aa).

78–91 lines the NAD(+) pocket; sequence GPKWEHLPPDQQPE. 4 residues coordinate substrate: arginine 99, arginine 109, arginine 138, and aspartate 227. Positions 227, 251, and 255 each coordinate Mg(2+). NAD(+) is bound at residue 285–297; the sequence is GSAPDIAGKNIAN.

Belongs to the isocitrate and isopropylmalate dehydrogenases family. LeuB type 1 subfamily. In terms of assembly, homodimer. Requires Mg(2+) as cofactor. Mn(2+) is required as a cofactor.

It is found in the cytoplasm. It carries out the reaction (2R,3S)-3-isopropylmalate + NAD(+) = 4-methyl-2-oxopentanoate + CO2 + NADH. The protein operates within amino-acid biosynthesis; L-leucine biosynthesis; L-leucine from 3-methyl-2-oxobutanoate: step 3/4. Requires K(+) ions for optimum activity. Functionally, catalyzes the oxidation of 3-carboxy-2-hydroxy-4-methylpentanoate (3-isopropylmalate) to 3-carboxy-4-methyl-2-oxopentanoate. The product decarboxylates to 4-methyl-2 oxopentanoate. This chain is 3-isopropylmalate dehydrogenase, found in Escherichia coli (strain K12).